A 369-amino-acid polypeptide reads, in one-letter code: Anhydro-N-acetylmuramic acid kinase (369 aa).

Residue 12–19 (GTSMDGVD) coordinates ATP.

It belongs to the anhydro-N-acetylmuramic acid kinase family.

It carries out the reaction 1,6-anhydro-N-acetyl-beta-muramate + ATP + H2O = N-acetyl-D-muramate 6-phosphate + ADP + H(+). The protein operates within amino-sugar metabolism; 1,6-anhydro-N-acetylmuramate degradation. It functions in the pathway cell wall biogenesis; peptidoglycan recycling. Its function is as follows. Catalyzes the specific phosphorylation of 1,6-anhydro-N-acetylmuramic acid (anhMurNAc) with the simultaneous cleavage of the 1,6-anhydro ring, generating MurNAc-6-P. Is required for the utilization of anhMurNAc either imported from the medium or derived from its own cell wall murein, and thus plays a role in cell wall recycling. The chain is Anhydro-N-acetylmuramic acid kinase from Shewanella baltica (strain OS223).